The chain runs to 469 residues: Pancreatic lipase-related protein 2 (469 aa).

A signal peptide spans 1–17 (MLPPWTLGLLLLATVRG). A disulfide bridge links cysteine 21 with cysteine 27. Residues 93–105 (IHGFLDKAEDSWP) form a required for galactolipase activity region. A disulfide bond links cysteine 109 and cysteine 120. The active-site Nucleophile is the serine 171. Aspartate 195 functions as the Charge relay system in the catalytic mechanism. Residues glutamate 206, arginine 209, aspartate 211, and aspartate 214 each contribute to the Ca(2+) site. A disulfide bond links cysteine 256 and cysteine 280. The required for galactolipase activity stretch occupies residues 257-279 (KKNVLSTITDIDGIWEGIGGFVS). Histidine 282 (charge relay system) is an active-site residue. Cystine bridges form between cysteine 304–cysteine 315 and cysteine 318–cysteine 323. N-linked (GlcNAc...) asparagine glycans are attached at residues asparagine 353 and asparagine 428. One can recognise a PLAT domain in the interval 357–469 (WRYKISVTLS…ENVLQSLYPC (113 aa)). Residues cysteine 453 and cysteine 469 are joined by a disulfide bond.

Belongs to the AB hydrolase superfamily. Lipase family. In terms of tissue distribution, pancreas.

The protein resides in the secreted. It is found in the zymogen granule membrane. It localises to the cell projection. Its subcellular location is the neuron projection. It catalyses the reaction a triacylglycerol + H2O = a diacylglycerol + a fatty acid + H(+). The catalysed reaction is a 1,2-diacyl-3-O-(beta-D-galactosyl)-sn-glycerol + 2 H2O = 3-beta-D-galactosyl-sn-glycerol + 2 a fatty acid + 2 H(+). It carries out the reaction 1,2,3-tri-(9Z-octadecenoyl)-glycerol + H2O = di-(9Z)-octadecenoylglycerol + (9Z)-octadecenoate + H(+). The enzyme catalyses di-(9Z)-octadecenoylglycerol + H2O = (9Z-octadecenoyl)-glycerol + (9Z)-octadecenoate + H(+). It catalyses the reaction (9Z-octadecenoyl)-glycerol + H2O = glycerol + (9Z)-octadecenoate + H(+). The catalysed reaction is 1-(9Z-octadecenoyl)-glycerol + H2O = glycerol + (9Z)-octadecenoate + H(+). It carries out the reaction 1,2,3-tripropanoylglycerol + H2O = dipropanoylglycerol + propanoate + H(+). The enzyme catalyses 1,2,3-tributanoylglycerol + H2O = dibutanoylglycerol + butanoate + H(+). It catalyses the reaction 1,2,3-trioctanoylglycerol + H2O = dioctanoylglycerol + octanoate + H(+). The catalysed reaction is 1,2-didecanoylglycerol + H2O = decanoylglycerol + decanoate + H(+). It carries out the reaction long chain 1,2-diacyl-3-O-beta-D-galactosyl-sn-glycerol + H2O = long chain acyl-3-O-beta-D-galactosyl-sn-glycerol + a fatty acid + H(+). The enzyme catalyses 1,2-dioctanoyl-3-O-beta-D-galactosyl-sn-glycerol + H2O = octanoyl-3-(beta-D-galactosyl)-sn-glycerol + octanoate + H(+). It catalyses the reaction 1,2-didodecanoyl-3-beta-D-galactosyl-sn-glycerol + H2O = dodecanoyl-3-beta-D-galactosyl-sn-glycerol + dodecanoate + H(+). The catalysed reaction is 1-beta-D-galactosyl-2,3-didodecanoyl-sn-glycerol + H2O = 1-beta-D-galactosyl-dodecanoyl-sn-glycerol + dodecanoate + H(+). It carries out the reaction a 1,2-diacyl-3-O-[alpha-D-galactosyl-(1-&gt;6)-beta-D-galactosyl]-sn-glycerol + H2O = acyl-3-O-[alpha-D-galactosyl-(1-&gt;6)-beta-D-galactosyl]-sn-glycerol + a fatty acid + H(+). The enzyme catalyses long chain 1,2-diacyl-3-O-[alpha-D-galactosyl-(1-&gt;6)-beta-D-galactosyl]-sn-glycerol + H2O = long chain acyl-3-O-[alpha-D-galactosyl-(1-&gt;6)-beta-D-galactosyl]-sn-glycerol + a fatty acid + H(+). It catalyses the reaction 1,2-dioctanoyl-3-O-[alpha-D-galactosyl-(1-&gt;6)-beta-D-galactosyl]-sn-glycerol + H2O = octanoyl-3-O-[alpha-D-galactosyl-(1-&gt;6)-beta-D-galactosyl]-sn-glycerol + octanoate + H(+). The catalysed reaction is 1,2-didodecanoyl-3-O-[alpha-D-galactosyl-(1-&gt;6)-beta-D-galactosyl]-sn-glycerol + H2O = dodecanoyl-3-O-[alpha-D-galactosyl-(1-&gt;6)-beta-D-galactosyl]-sn-glycerol + dodecanoate + H(+). It carries out the reaction a 1,2-diacyl-sn-glycero-3-phosphocholine + H2O = a monoacyl-sn-glycero-3-phosphocholine + a fatty acid + H(+). Its pathway is glycerolipid metabolism; triacylglycerol degradation. It functions in the pathway glycolipid metabolism. With respect to regulation, regulated by CLPS and bile salts levels ranging 1-5 mM in neonates and 2-30 mM in healthy adults. CLPS stimulates milk fat digestion in the presence of 4 mM bile salts. Triacylglycerol lipase activity toward short- and medium-chain triglycerides is inhibited by increasing concentrations of bile salts and weakly reactivated by CLPS. Optimal triacylglycerol lipase activity is reached at bile salts concentrations ranging from 0.1 to 0.5 mM and then decreases at concentrations higher than 1 mM. Lipase activity toward long-chain glycerolipids is stimulated by CLPS in the presence of 4 mM bile salts. Galactolipase activity is inhibited at high concentrations of bile salts. Triacylglycerol lipase activity is inhibited by anti-obesity drug tetrahydrolipstatin. In terms of biological role, lipase that primarily hydrolyzes triglycerides and galactosylglycerides. In neonates, may play a major role in pancreatic digestion of dietary fats such as milk fat globules enriched in long-chain triglycerides. Hydrolyzes short-, medium- and long-chain fatty acyls in triglycerides without apparent positional specificity. Can completely deacylate triacylglycerols. When the liver matures and bile salt synthesis increases, likely functions mainly as a galactolipase and monoacylglycerol lipase. Hydrolyzes monogalactosyldiglycerols (MGDG) and digalactosyldiacylglycerols (DGDG) present in a plant-based diet, releasing long-chain polyunsaturated fatty acids. Hydrolyzes medium- and long-chain fatty acyls in galactolipids. May act together with LIPF to hydrolyze partially digested triglycerides. Hydrolyzes long-chain monoglycerides with high efficiency. In cytotoxic T cells, contributes to perforin-dependent cell lysis, but is unlikely to mediate direct cytotoxicity. Also has low phospholipase activity. In neurons, required for the localization of the phospholipid 1-oleoyl-2-palmitoyl-PC (OPPC) to neurite tips through acyl chain remodeling of membrane phospholipids. The resulting OPPC-rich lipid membrane domain recruits the t-SNARE protein STX4 by selectively interacting with the STX4 transmembrane domain and this promotes surface expression of the dopamine transporter SLC6A3/DAT at neurite tips by facilitating fusion of SLC6A3-containing transport vesicles with the plasma membrane. In Homo sapiens (Human), this protein is Pancreatic lipase-related protein 2.